Consider the following 452-residue polypeptide: Adenylosuccinate synthetase (452 aa).

Residues 40–46 (GDEGKGK) and 68–70 (GHT) contribute to the GTP site. The active-site Proton acceptor is Asp-41. Residues Asp-41 and Gly-68 each coordinate Mg(2+). Residues 41-44 (DEGK), 66-69 (NAGH), Thr-158, Arg-172, Asn-250, Thr-265, and Arg-329 contribute to the IMP site. His-69 acts as the Proton donor in catalysis. Position 325 to 331 (325 to 331 (VTTKRKR)) interacts with substrate. Residues Arg-331, 357-359 (KLD), and 440-442 (GVG) contribute to the GTP site.

It belongs to the adenylosuccinate synthetase family. Homodimer. Requires Mg(2+) as cofactor.

The protein localises to the cytoplasm. The enzyme catalyses IMP + L-aspartate + GTP = N(6)-(1,2-dicarboxyethyl)-AMP + GDP + phosphate + 2 H(+). The protein operates within purine metabolism; AMP biosynthesis via de novo pathway; AMP from IMP: step 1/2. Plays an important role in the de novo pathway and in the salvage pathway of purine nucleotide biosynthesis. Catalyzes the first committed step in the biosynthesis of AMP from IMP. In Drosophila grimshawi (Hawaiian fruit fly), this protein is Adenylosuccinate synthetase.